A 298-amino-acid chain; its full sequence is MQDFSSLLLKLQEYWKNQGCLVIQPYDIPAGAGTFHPATLLRSLDKKPWNVAYVAPSRRPTDGRYGENPNRLGSYYQFQVVIKPSPSNIQEMYLKSLEVLGINLNEHDIRFVEDNWESPTLGAWGLGWEVWLDGMEVTQFTYFQQVGGIPCSPIPVEITYGLERLAMYVQKVENILEIEWAKNNHDSVRYAQVHLESEYQFSKYHFEIASVRRLLEMFKNAQAEALHCLENKLPLPAYDFVMLCSHFFNILDARKAISVAERQNYILQIRDLAKGCAVLYKEQEKEREERLKNALTKA.

The protein belongs to the class-II aminoacyl-tRNA synthetase family. As to quaternary structure, tetramer of two alpha and two beta subunits.

It is found in the cytoplasm. The catalysed reaction is tRNA(Gly) + glycine + ATP = glycyl-tRNA(Gly) + AMP + diphosphate. In Helicobacter pylori (strain HPAG1), this protein is Glycine--tRNA ligase alpha subunit.